The chain runs to 427 residues: Adenylosuccinate synthetase (427 aa).

Residues 12–18 and 40–42 contribute to the GTP site; these read GDEGKGK and GHT. Asp-13 (proton acceptor) is an active-site residue. Asp-13 and Gly-40 together coordinate Mg(2+). IMP contacts are provided by residues 13-16, 38-41, Thr-128, Arg-142, Gln-223, Thr-238, and Arg-302; these read DEGK and NAGH. Residue His-41 is the Proton donor of the active site. 298 to 304 serves as a coordination point for substrate; the sequence is TTTGRAR. Residues Arg-304, 330–332, and 412–414 contribute to the GTP site; these read KLD and AVG.

Belongs to the adenylosuccinate synthetase family. As to quaternary structure, homodimer. The cofactor is Mg(2+).

The protein localises to the cytoplasm. It catalyses the reaction IMP + L-aspartate + GTP = N(6)-(1,2-dicarboxyethyl)-AMP + GDP + phosphate + 2 H(+). It functions in the pathway purine metabolism; AMP biosynthesis via de novo pathway; AMP from IMP: step 1/2. Its function is as follows. Plays an important role in the de novo pathway of purine nucleotide biosynthesis. Catalyzes the first committed step in the biosynthesis of AMP from IMP. This is Adenylosuccinate synthetase from Desulfitobacterium hafniense (strain Y51).